The sequence spans 377 residues: Apelin receptor (377 aa).

Residues 1–28 (MEDDGYNYYGADNQSECDYADWTPSGAL) lie on the Extracellular side of the membrane. Residue asparagine 13 is glycosylated (N-linked (GlcNAc...) asparagine). Cystine bridges form between cysteine 17-cysteine 279 and cysteine 100-cysteine 179. Residues 29–52 (IPAIYILVFLLGTTGNGLVLWTVF) form a helical membrane-spanning segment. The Cytoplasmic segment spans residues 53–62 (WSSREKRRSA). Residues 63–84 (DIFIASLAVADLTFVVTLPLWA) form a helical membrane-spanning segment. Residues 85–97 (TYTYREFDWPFGT) are Extracellular-facing. The chain crosses the membrane as a helical span at residues 98-123 (FSCKLSSYLIFVNMYASVFCLTGLSF). Residues 124 to 144 (DRYLAIVRPVANARLRLRVSG) lie on the Cytoplasmic side of the membrane. A helical membrane pass occupies residues 145 to 162 (AVATAVLWVLAALLAVPV). Residues 163–196 (MVFRSTDIPENSTKTQCYMDYSMVATSNSEWAWE) are Extracellular-facing. The N-linked (GlcNAc...) asparagine glycan is linked to asparagine 173. The helical transmembrane segment at 197–221 (VGLGVSSTAVGFVVPFIIMLTCYFF) threads the bilayer. The Cytoplasmic portion of the chain corresponds to 222-244 (IAQTIAGHFRKERIEGLRKRRRL). A helical transmembrane segment spans residues 245–268 (LSIIVVLVVTFALCWMPYHLVKTL). The Extracellular segment spans residues 269–287 (YMLGNLLHWPCDFDSFLMN). Residues 288 to 310 (VFPYCTCISYVNSCLNPFLYAFF) form a helical membrane-spanning segment. Over 311–377 (DPRFRRACTS…IPYSQETLVD (67 aa)) the chain is Cytoplasmic. Residues 335–349 (SSSAEKSASYSSGHS) are compositionally biased toward low complexity. A disordered region spans residues 335-377 (SSSAEKSASYSSGHSQGPGPNMCKGGEPMHEKSIPYSQETLVD).

Belongs to the G-protein coupled receptor 1 family. In terms of assembly, homodimer; dimerization inhibits APLNR-mediated G protein and beta-arrestin signaling pathways compared to monomeric APLNR. Widely expressed. Highest expression in the lung, lower in the heart, placenta, ovary, skeletal muscle, mammary gland, kidney and several structures in the brain as the hypothalamus (supraoptic and periventricular nuclei), pituitary, olfactory bulb and pineal gland.

The protein resides in the cell membrane. Its function is as follows. G protein-coupled receptor for peptide hormones apelin (APLN) and apelin receptor early endogenous ligand (APELA/ELA), that plays a role in the regulation of normal cardiovascular function and fluid homeostasis. When acting as apelin receptor, activates both G(i) protein pathway that inhibits adenylate cyclase activity, and the beta-arrestin pathway that promotes internalization of the receptor. APLNR/APJ also functions as mechanoreceptor that is activated by pathological stimuli in a G-protein-independent fashion to induce beta-arrestin signaling, hence eliciting cardiac hypertrophy. However, the presence of apelin ligand blunts cardiac hypertrophic induction from APLNR/APJ on response to pathological stimuli. Plays a key role in early development such as gastrulation, blood vessels formation and heart morphogenesis by acting as a APELA receptor. May promote angioblast migration toward the embryonic midline, i.e. the position of the future vessel formation, during vasculogenesis. Promotes sinus venosus (SV)-derived endothelial cells migration into the developing heart to promote coronary blood vessel development. Also plays a role in various processes in adults such as regulation of blood vessel formation, blood pressure, heart contractility and heart failure. The chain is Apelin receptor from Rattus norvegicus (Rat).